Here is a 159-residue protein sequence, read N- to C-terminus: Small ribosomal subunit protein uS9 (159 aa).

Belongs to the universal ribosomal protein uS9 family.

This chain is Small ribosomal subunit protein uS9, found in Bradyrhizobium diazoefficiens (strain JCM 10833 / BCRC 13528 / IAM 13628 / NBRC 14792 / USDA 110).